The sequence spans 361 residues: Alanine racemase (361 aa).

Lysine 34 serves as the catalytic Proton acceptor; specific for D-alanine. Lysine 34 bears the N6-(pyridoxal phosphate)lysine mark. Substrate is bound at residue arginine 129. Tyrosine 256 serves as the catalytic Proton acceptor; specific for L-alanine. Residue methionine 304 coordinates substrate.

Belongs to the alanine racemase family. Homodimer. It depends on pyridoxal 5'-phosphate as a cofactor.

It catalyses the reaction L-alanine = D-alanine. It functions in the pathway amino-acid biosynthesis; D-alanine biosynthesis; D-alanine from L-alanine: step 1/1. In terms of biological role, catalyzes the interconversion of L-alanine and D-alanine. May also act on other amino acids. The protein is Alanine racemase (alr) of Corynebacterium glutamicum (strain ATCC 13032 / DSM 20300 / JCM 1318 / BCRC 11384 / CCUG 27702 / LMG 3730 / NBRC 12168 / NCIMB 10025 / NRRL B-2784 / 534).